The following is a 183-amino-acid chain: Pyruvoyl-dependent arginine decarboxylase 2 (183 aa).

Serine 41 bears the Pyruvic acid (Ser) mark.

This sequence belongs to the PdaD family. Pyruvate serves as cofactor.

It carries out the reaction L-arginine + H(+) = agmatine + CO2. This chain is Pyruvoyl-dependent arginine decarboxylase 2 (pdaD2), found in Methanosarcina acetivorans (strain ATCC 35395 / DSM 2834 / JCM 12185 / C2A).